The primary structure comprises 350 residues: Vetispiradiene synthase 3 (350 aa).

Mg(2+)-binding residues include D103, D107, D246, T250, and E254. The short motif at D103 to D107 is the DDXXD motif element.

Belongs to the terpene synthase family. Tpsa subfamily. It depends on Mg(2+) as a cofactor.

The protein localises to the cytoplasm. The enzyme catalyses (2E,6E)-farnesyl diphosphate = (-)-vetispiradiene + diphosphate. The protein operates within secondary metabolite biosynthesis; terpenoid biosynthesis. Sesquiterpene synthase that catalyzes the formation of vetispiradiene from trans,trans-farnesyl diphosphate. The initial internal cyclization produces the monocyclic intermediate germacrene A. In Hyoscyamus muticus (Egyptian henbane), this protein is Vetispiradiene synthase 3.